The sequence spans 230 residues: Ribosomal RNA small subunit methyltransferase Nep1 (230 aa).

S-adenosyl-L-methionine contacts are provided by residues glycine 184, glycine 189, and 205–210; that span reads IYNKPL.

Belongs to the class IV-like SAM-binding methyltransferase superfamily. RNA methyltransferase NEP1 family. Homodimer.

It catalyses the reaction a pseudouridine in rRNA + S-adenosyl-L-methionine = an N(1)-methylpseudouridine in rRNA + S-adenosyl-L-homocysteine + H(+). Functionally, methyltransferase involved in ribosomal biogenesis. Specifically catalyzes the N1-methylation of the pseudouridine corresponding to position 914 in M.jannaschii 16S rRNA. The chain is Ribosomal RNA small subunit methyltransferase Nep1 from Staphylothermus marinus (strain ATCC 43588 / DSM 3639 / JCM 9404 / F1).